The chain runs to 189 residues: dCTP deaminase, dUMP-forming (189 aa).

DCTP contacts are provided by residues 101 to 106 (KSSLGR), Asp-119, 127 to 129 (TLE), Gln-148, Tyr-162, and Gln-174. Glu-129 functions as the Proton donor/acceptor in the catalytic mechanism.

The protein belongs to the dCTP deaminase family. Homotrimer.

The catalysed reaction is dCTP + 2 H2O = dUMP + NH4(+) + diphosphate. The protein operates within pyrimidine metabolism; dUMP biosynthesis; dUMP from dCTP: step 1/1. Its function is as follows. Bifunctional enzyme that catalyzes both the deamination of dCTP to dUTP and the hydrolysis of dUTP to dUMP without releasing the toxic dUTP intermediate. This chain is dCTP deaminase, dUMP-forming, found in Rhodococcus jostii (strain RHA1).